Consider the following 984-residue polypeptide: Hyaluronate lyase (984 aa).

Polar residues-rich tracts occupy residues 1–12 (MKQVVDNQTQNK), 19–32 (DFNQTNPVSGSWSH), and 54–66 (IQRTEQGQVSLSS). Disordered regions lie at residues 1 to 32 (MKQVVDNQTQNKELVKNGDFNQTNPVSGSWSH) and 49 to 68 (DKSPIIQRTEQGQVSLSSDK). The N-terminal stretch at 1-40 (MKQVVDNQTQNKELVKNGDFNQTNPVSGSWSHTSAREWSA) is a signal peptide. Active-site residues include N429, H479, and Y488. The segment covering 701–726 (TEKDAKREDTTKEFMSKHSKDAKEKT) has biased composition (basic and acidic residues). The segment at 701–728 (TEKDAKREDTTKEFMSKHSKDAKEKTGQ) is disordered.

Belongs to the polysaccharide lyase 8 family.

It localises to the secreted. The catalysed reaction is [hyaluronan](n) = n 3-(4-deoxy-beta-D-gluc-4-enuronosyl)-N-acetyl-D-glucosamine + H2O. This is Hyaluronate lyase from Streptococcus agalactiae serotype III (strain NEM316).